Reading from the N-terminus, the 376-residue chain is Chaperone protein DnaJ (376 aa).

The 66-residue stretch at 5–70 (DYYEVLGVGR…DKKAAYDQFG (66 aa)) folds into the J domain. The CR-type zinc-finger motif lies at 132–210 (GLTKELRIPT…CHGDGRVEKS (79 aa)). Zn(2+)-binding residues include cysteine 145, cysteine 148, cysteine 162, cysteine 165, cysteine 184, cysteine 187, cysteine 198, and cysteine 201. 4 CXXCXGXG motif repeats span residues 145–152 (CDLCDGSG), 162–169 (CTTCHGQG), 184–191 (CPTCHGRG), and 198–205 (CSKCHGDG).

The protein belongs to the DnaJ family. As to quaternary structure, homodimer. Zn(2+) serves as cofactor.

It is found in the cytoplasm. Its function is as follows. Participates actively in the response to hyperosmotic and heat shock by preventing the aggregation of stress-denatured proteins and by disaggregating proteins, also in an autonomous, DnaK-independent fashion. Unfolded proteins bind initially to DnaJ; upon interaction with the DnaJ-bound protein, DnaK hydrolyzes its bound ATP, resulting in the formation of a stable complex. GrpE releases ADP from DnaK; ATP binding to DnaK triggers the release of the substrate protein, thus completing the reaction cycle. Several rounds of ATP-dependent interactions between DnaJ, DnaK and GrpE are required for fully efficient folding. Also involved, together with DnaK and GrpE, in the DNA replication of plasmids through activation of initiation proteins. The sequence is that of Chaperone protein DnaJ from Shewanella sp. (strain W3-18-1).